We begin with the raw amino-acid sequence, 335 residues long: 2-keto-3-deoxygluconate permease (335 aa).

10 helical membrane passes run 10-30 (IPGG…TAAP), 42-62 (GIIT…GASI), 77-97 (LVLT…QLLP), 100-120 (GIEV…AMDM), 141-161 (AFVL…LGSA), 163-183 (LASF…IGFA), 200-220 (QTLI…GVIL), 224-244 (LLGI…LIIA), 254-274 (TAGL…VIIA), and 289-309 (ALVA…TAMY).

Belongs to the KdgT transporter family.

The protein resides in the cell inner membrane. It carries out the reaction 2-dehydro-3-deoxy-D-gluconate(in) + H(+)(in) = 2-dehydro-3-deoxy-D-gluconate(out) + H(+)(out). Its function is as follows. Catalyzes the proton-dependent uptake of 2-keto-3-deoxygluconate (KDG) into the cell. The sequence is that of 2-keto-3-deoxygluconate permease from Tolumonas auensis (strain DSM 9187 / NBRC 110442 / TA 4).